The primary structure comprises 160 residues: MTEQRFTHLDDSGRAQMVDVTDKDITQRAATAQARVRMQPSTLQMILAGEHPKGDVLATARIAGIQAAKKTWDLIPLCHPLLLTGITVTIEPEADDALCVQATCKLKGTTGVEMEALTAASVACLTLYDMCKAVDRCMVIESVCLLEKSGGRSGTFRRER.

Substrate is bound by residues 77–79 (LCH) and 114–115 (ME). The active site involves aspartate 129.

It belongs to the MoaC family. In terms of assembly, homohexamer; trimer of dimers.

It carries out the reaction (8S)-3',8-cyclo-7,8-dihydroguanosine 5'-triphosphate = cyclic pyranopterin phosphate + diphosphate. Its pathway is cofactor biosynthesis; molybdopterin biosynthesis. In terms of biological role, catalyzes the conversion of (8S)-3',8-cyclo-7,8-dihydroguanosine 5'-triphosphate to cyclic pyranopterin monophosphate (cPMP). This is Cyclic pyranopterin monophosphate synthase from Alcanivorax borkumensis (strain ATCC 700651 / DSM 11573 / NCIMB 13689 / SK2).